The chain runs to 162 residues: Large ribosomal subunit protein uL15 (162 aa).

The interval 1-41 (MKLSDIADNAGSRKKRMRVGRGIGSGKGKTAGRGGKGQTAR) is disordered. A compositionally biased stretch (gly residues) spans 21 to 37 (RGIGSGKGKTAGRGGKG).

This sequence belongs to the universal ribosomal protein uL15 family. As to quaternary structure, part of the 50S ribosomal subunit.

Its function is as follows. Binds to the 23S rRNA. This chain is Large ribosomal subunit protein uL15, found in Rhodopseudomonas palustris (strain BisB18).